A 594-amino-acid chain; its full sequence is Proline--tRNA ligase (594 aa).

This sequence belongs to the class-II aminoacyl-tRNA synthetase family. ProS type 1 subfamily. Homodimer.

It localises to the cytoplasm. The enzyme catalyses tRNA(Pro) + L-proline + ATP = L-prolyl-tRNA(Pro) + AMP + diphosphate. In terms of biological role, catalyzes the attachment of proline to tRNA(Pro) in a two-step reaction: proline is first activated by ATP to form Pro-AMP and then transferred to the acceptor end of tRNA(Pro). As ProRS can inadvertently accommodate and process non-cognate amino acids such as alanine and cysteine, to avoid such errors it has two additional distinct editing activities against alanine. One activity is designated as 'pretransfer' editing and involves the tRNA(Pro)-independent hydrolysis of activated Ala-AMP. The other activity is designated 'posttransfer' editing and involves deacylation of mischarged Ala-tRNA(Pro). The misacylated Cys-tRNA(Pro) is not edited by ProRS. The sequence is that of Proline--tRNA ligase from Synechococcus sp. (strain WH7803).